We begin with the raw amino-acid sequence, 393 residues long: NAD(P)H-quinone oxidoreductase subunit H, chloroplastic (393 aa).

Belongs to the complex I 49 kDa subunit family. As to quaternary structure, NDH is composed of at least 16 different subunits, 5 of which are encoded in the nucleus.

The protein resides in the plastid. Its subcellular location is the chloroplast thylakoid membrane. It catalyses the reaction a plastoquinone + NADH + (n+1) H(+)(in) = a plastoquinol + NAD(+) + n H(+)(out). The catalysed reaction is a plastoquinone + NADPH + (n+1) H(+)(in) = a plastoquinol + NADP(+) + n H(+)(out). NDH shuttles electrons from NAD(P)H:plastoquinone, via FMN and iron-sulfur (Fe-S) centers, to quinones in the photosynthetic chain and possibly in a chloroplast respiratory chain. The immediate electron acceptor for the enzyme in this species is believed to be plastoquinone. Couples the redox reaction to proton translocation, and thus conserves the redox energy in a proton gradient. This is NAD(P)H-quinone oxidoreductase subunit H, chloroplastic from Cicer arietinum (Chickpea).